We begin with the raw amino-acid sequence, 472 residues long: MVVLFKAGSLGPATNSFIIAATRRGQIRLYNILQDTTIPEPKRKYIPSSGTYPKGFRVSGTHVGVKAANTKYPDLALISSDKPCTAAAAVFTTNKFQAAPVQLSKVTLEQRKGKGIQSVVINSGCANAVTGKGGLEDARSMAAKVDECNGTSEPSTLVMSTGVIGQRLPISKILDKIPTAYSNLASTHNAWLATARAICTTDTFPKLISRTFSLPSSPGITYSLAGMTKGAGMIHPNMATLLGVLCTDAPVDASVMKPLLLHAVSRSFNSISIDGDTSTNDTIAFLANGAAGGQTIASSTSQDYAALQKVLTSFAQSLSQLVVRDGEGATKFVTVRVQNSPCYDSARRIASTIARSPLVKTALYGRDANWGRILCAVGYTDGVTEGTVVPERTSVSFKPVDGSPTLRLLVNGEPEVVDEERASAILQDEDLEIIVDLGGGDKGEKGLGGEEAVYWFCDFSHEYVTINGDYRT.

The substrate site is built by Thr200, Lys229, Thr240, Glu327, Asn467, and Thr472. Residue Thr240 is the Nucleophile of the active site.

The protein belongs to the ArgJ family. Heterodimer of an alpha and a beta chain. Post-translationally, the alpha and beta chains are autoproteolytically processed from a single precursor protein within the mitochondrion.

It localises to the mitochondrion matrix. The catalysed reaction is N(2)-acetyl-L-ornithine + L-glutamate = N-acetyl-L-glutamate + L-ornithine. It carries out the reaction L-glutamate + acetyl-CoA = N-acetyl-L-glutamate + CoA + H(+). It participates in amino-acid biosynthesis; L-arginine biosynthesis; L-ornithine and N-acetyl-L-glutamate from L-glutamate and N(2)-acetyl-L-ornithine (cyclic): step 1/1. It functions in the pathway amino-acid biosynthesis; L-arginine biosynthesis; N(2)-acetyl-L-ornithine from L-glutamate: step 1/4. In terms of biological role, catalyzes two activities which are involved in the cyclic version of arginine biosynthesis: the synthesis of acetylglutamate from glutamate and acetyl-CoA, and of ornithine by transacetylation between acetylornithine and glutamate. The sequence is that of Arginine biosynthesis bifunctional protein ArgJ, mitochondrial from Talaromyces marneffei (strain ATCC 18224 / CBS 334.59 / QM 7333) (Penicillium marneffei).